The sequence spans 452 residues: Deoxybrevianamide E synthase notF (452 aa).

Positions 1–19 (MTAPELRVDTFRAPEDAPK) are enriched in basic and acidic residues. The tract at residues 1–38 (MTAPELRVDTFRAPEDAPKEPSAQQPRLPSSPSPAQAL) is disordered. Low complexity predominate over residues 21-38 (PSAQQPRLPSSPSPAQAL). A brevianamide F-binding site is contributed by glutamate 108. Residues arginine 122, lysine 212, tyrosine 214, lysine 282, tyrosine 284, tyrosine 371, tyrosine 436, and tyrosine 440 each contribute to the dimethylallyl diphosphate site.

Belongs to the tryptophan dimethylallyltransferase family. Monomer.

It catalyses the reaction brevianamide F + dimethylallyl diphosphate = deoxybrevianamide E + diphosphate. It functions in the pathway alkaloid biosynthesis. Its activity is regulated as follows. Addition of 5 mM Mg(2+), Ca(2+) or Mn(2+) slightly enhances catalysis (about 100-120%). Significant reduction of enzyme activity (2%-35%) is observed with Cu(2+), Zn(2+), Fe(2+), or Sn(2+) (5 mM). Its function is as follows. Deoxybrevianamide E synthase; part of the gene cluster that mediates the biosynthesis of notoamide, a fungal indole alkaloid that belongs to a family of natural products containing a characteristic bicyclo[2.2.2]diazaoctane core. The first step of notoamide biosynthesis involves coupling of L-proline and L-tryptophan by the bimodular NRPS notE, to produce cyclo-L-tryptophan-L-proline called brevianamide F. The reverse prenyltransferase notF then acts as a deoxybrevianamide E synthase and converts brevianamide F to deoxybrevianamide E via reverse prenylation at C-2 of the indole ring leading to the bicyclo[2.2.2]diazaoctane core. Deoxybrevianamide E is further hydroxylated at C-6 of the indole ring, likely catalyzed by the cytochrome P450 monooxygenase notG, to yield 6-hydroxy-deoxybrevianamide E. 6-hydroxy-deoxybrevianamide E is a specific substrate of the prenyltransferase notC for normal prenylation at C-7 to produce 6-hydroxy-7-prenyl-deoxybrevianamide, also called notoamide S. As the proposed pivotal branching point in notoamide biosynthesis, notoamide S can be diverted to notoamide E through an oxidative pyran ring closure putatively catalyzed by either notH cytochrome P450 monooxygenase or the notD FAD-linked oxidoreductase. This step would be followed by an indole 2,3-epoxidation-initiated pinacol-like rearrangement catalyzed by the notB FAD-dependent monooxygenase leading to the formation of notoamide C and notoamide D. On the other hand notoamide S is converted to notoamide T by notH (or notD), a bifunctional oxidase that also functions as the intramolecular Diels-Alderase responsible for generation of (+)-notoamide T. To generate antipodal (-)-notoaminide T, notH' (or notD') in Aspergillus versicolor is expected to catalyze a Diels-Alder reaction leading to the opposite stereochemistry. The remaining oxidoreductase notD (or notH) likely catalyzes the oxidative pyran ring formation to yield (+)-stephacidin A. The FAD-dependent monooxygenase notI is highly similar to notB and is predicted to catalyze a similar conversion from (+)-stephacidin A to (-)-notoamide B via the 2,3-epoxidation of (+)-stephacidin A followed by a pinacol-type rearrangement. Finally, it remains unclear which enzyme could be responsible for the final hydroxylation steps leading to notoamide A and sclerotiamide. This chain is Deoxybrevianamide E synthase notF, found in Aspergillus sp. (strain MF297-2).